Consider the following 525-residue polypeptide: Glutamate--cysteine ligase (525 aa).

The protein belongs to the glutamate--cysteine ligase type 1 family. Type 1 subfamily.

The catalysed reaction is L-cysteine + L-glutamate + ATP = gamma-L-glutamyl-L-cysteine + ADP + phosphate + H(+). It functions in the pathway sulfur metabolism; glutathione biosynthesis; glutathione from L-cysteine and L-glutamate: step 1/2. The polypeptide is Glutamate--cysteine ligase (Alcanivorax borkumensis (strain ATCC 700651 / DSM 11573 / NCIMB 13689 / SK2)).